The following is a 195-amino-acid chain: Glutamyl-tRNA(Gln) amidotransferase subunit C, mitochondrial (195 aa).

Residues 1–18 constitute a mitochondrion transit peptide; that stretch reads MNLSTIGFQVIFKQRLRC.

It belongs to the GatC family. Subunit of the heterotrimeric GatCAB amidotransferase (AdT) complex, composed of A, B and C subunits.

It localises to the mitochondrion. It catalyses the reaction L-glutamyl-tRNA(Gln) + L-glutamine + ATP + H2O = L-glutaminyl-tRNA(Gln) + L-glutamate + ADP + phosphate + H(+). Its function is as follows. Allows the formation of correctly charged Gln-tRNA(Gln) through the transamidation of misacylated Glu-tRNA(Gln) in the mitochondria. The reaction takes place in the presence of glutamine and ATP through an activated gamma-phospho-Glu-tRNA(Gln). The protein is Glutamyl-tRNA(Gln) amidotransferase subunit C, mitochondrial of Brugia malayi (Filarial nematode worm).